Consider the following 172-residue polypeptide: Inorganic pyrophosphatase (172 aa).

Residues K28, R42, and Y54 each contribute to the substrate site. Residues D64, D69, and D101 each contribute to the Mg(2+) site. Substrate is bound at residue Y140.

Belongs to the PPase family. As to quaternary structure, homohexamer. It depends on Mg(2+) as a cofactor.

It localises to the cytoplasm. The catalysed reaction is diphosphate + H2O = 2 phosphate + H(+). Its function is as follows. Catalyzes the hydrolysis of inorganic pyrophosphate (PPi) forming two phosphate ions. The polypeptide is Inorganic pyrophosphatase (Campylobacter jejuni subsp. jejuni serotype O:2 (strain ATCC 700819 / NCTC 11168)).